The following is a 397-amino-acid chain: Elongation factor Tu (397 aa).

A tr-type G domain is found at 10–207 (KPHVNVGTVG…AIDAYVPDPV (198 aa)). The interval 19–26 (GHIDHGKT) is G1. 19-26 (GHIDHGKT) is a GTP binding site. Thr-26 contributes to the Mg(2+) binding site. The tract at residues 60–64 (GITIA) is G2. Positions 81-84 (DCPG) are G3. GTP-binding positions include 81 to 85 (DCPGH) and 136 to 139 (NKVD). The G4 stretch occupies residues 136–139 (NKVD). Residues 174 to 176 (SAL) are G5.

This sequence belongs to the TRAFAC class translation factor GTPase superfamily. Classic translation factor GTPase family. EF-Tu/EF-1A subfamily. Monomer.

It localises to the cytoplasm. The catalysed reaction is GTP + H2O = GDP + phosphate + H(+). In terms of biological role, GTP hydrolase that promotes the GTP-dependent binding of aminoacyl-tRNA to the A-site of ribosomes during protein biosynthesis. In Syntrophobacter fumaroxidans (strain DSM 10017 / MPOB), this protein is Elongation factor Tu.